The sequence spans 185 residues: NEDD8-conjugating enzyme UBE2F (185 aa).

Residues 1–29 form an interaction with UBA3 region; it reads MLTLASKLKRDDGVRGPRASNPASDSTRR. The interval 11 to 30 is disordered; that stretch reads DDGVRGPRASNPASDSTRRV. The UBC core domain maps to 32-185; that stretch reads VRDKLLVKEV…VEDYIKRYAR (154 aa). The Glycyl thioester intermediate role is filled by Cys-116.

It belongs to the ubiquitin-conjugating enzyme family. UBE2F subfamily.

The catalysed reaction is [E1 NEDD8-activating enzyme]-S-[NEDD8 protein]-yl-L-cysteine + [E2 NEDD8-conjugating enzyme]-L-cysteine = [E1 NEDD8-activating enzyme]-L-cysteine + [E2 NEDD8-conjugating enzyme]-S-[NEDD8-protein]-yl-L-cysteine.. Its pathway is protein modification; protein neddylation. Functionally, accepts the ubiquitin-like protein NEDD8 from the UBA3-NAE1 E1 complex and catalyzes its covalent attachment to other proteins. Together with the E3 ubiquitin ligase RNF7/RBX2, specifically neddylates cullin-5 (CUL5). Does not neddylate CUL1, CUL2, CUL3, CUL4A or CUL4B. This Gallus gallus (Chicken) protein is NEDD8-conjugating enzyme UBE2F (UBE2F).